The chain runs to 399 residues: Putative 8-amino-7-oxononanoate synthase (399 aa).

Residue R24 participates in substrate binding. A pyridoxal 5'-phosphate-binding site is contributed by 111-112 (GW). Residue H141 participates in substrate binding. Pyridoxal 5'-phosphate contacts are provided by residues S189, 214–217 (DEAH), and 243–246 (TFSK). K246 carries the N6-(pyridoxal phosphate)lysine modification. Residue T360 coordinates substrate.

It belongs to the class-II pyridoxal-phosphate-dependent aminotransferase family. BioF subfamily. Homodimer. The cofactor is pyridoxal 5'-phosphate.

It carries out the reaction 6-carboxyhexanoyl-[ACP] + L-alanine + H(+) = (8S)-8-amino-7-oxononanoate + holo-[ACP] + CO2. It participates in cofactor biosynthesis; biotin biosynthesis. Catalyzes the decarboxylative condensation of pimeloyl-[acyl-carrier protein] and L-alanine to produce 8-amino-7-oxononanoate (AON), [acyl-carrier protein], and carbon dioxide. In Bordetella bronchiseptica (strain ATCC BAA-588 / NCTC 13252 / RB50) (Alcaligenes bronchisepticus), this protein is Putative 8-amino-7-oxononanoate synthase (bioF).